Reading from the N-terminus, the 44-residue chain is Keratin-associated protein 20-3 (44 aa).

It belongs to the KRTAP type 20 family. As to quaternary structure, interacts with hair keratins.

Functionally, in the hair cortex, hair keratin intermediate filaments are embedded in an interfilamentous matrix, consisting of hair keratin-associated proteins (KRTAP), which are essential for the formation of a rigid and resistant hair shaft through their extensive disulfide bond cross-linking with abundant cysteine residues of hair keratins. The matrix proteins include the high-sulfur and high-glycine-tyrosine keratins. The polypeptide is Keratin-associated protein 20-3 (KRTAP20-3) (Homo sapiens (Human)).